The primary structure comprises 334 residues: Ornithine carbamoyltransferase (334 aa).

Residues 57–60 (STRT), Gln84, Arg108, and 135–138 (HPTQ) each bind carbamoyl phosphate. L-ornithine-binding positions include Asn169, Asp233, and 237–238 (SM). Carbamoyl phosphate is bound by residues 275–276 (CL) and Arg320.

The protein belongs to the aspartate/ornithine carbamoyltransferase superfamily. OTCase family.

The protein localises to the cytoplasm. It carries out the reaction carbamoyl phosphate + L-ornithine = L-citrulline + phosphate + H(+). It participates in amino-acid biosynthesis; L-arginine biosynthesis; L-arginine from L-ornithine and carbamoyl phosphate: step 1/3. Its function is as follows. Reversibly catalyzes the transfer of the carbamoyl group from carbamoyl phosphate (CP) to the N(epsilon) atom of ornithine (ORN) to produce L-citrulline. This is Ornithine carbamoyltransferase from Vibrio vulnificus (strain YJ016).